Reading from the N-terminus, the 1074-residue chain is Formin-G (1074 aa).

A GBD/FH3 domain is found at 34-423 (LQMQQGSKTY…DKINEFEKKI (390 aa)). 2 disordered regions span residues 476–507 (QSISPSQDSSNNQKASSSSSNTSTLNDSDIQS) and 549–639 (FTPT…NPSS). Residues 481–503 (SQDSSNNQKASSSSSNTSTLNDS) are compositionally biased toward low complexity. Residues 502–530 (DSDIQSIQSSLKEATLEIERLKLAIEEKM) adopt a coiled-coil conformation. Residues 549-561 (FTPTSPDISNDGQ) show a composition bias toward polar residues. The segment covering 568 to 610 (APPPSPSPPPPISGGGAPPPPPPPPPPPSGGGAPPPPPPPPPS) has biased composition (pro residues). One can recognise an FH1 domain in the interval 597-623 (GGGAPPPPPPPPPSGGKKAGAPGAPPT). In terms of domain architecture, FH2 spans 631–1031 (NKPVINPSSK…ASGDNGAVQN (401 aa)). A coiled-coil region spans residues 914–971 (DINDLEKQFNISKNNCKKVLEANIPSSSKFQSTIGSFLEKTEIDIKNLKENQKNIVDS). The 37-residue stretch at 1037 to 1073 (GADPLAALANAIKLGQTGLRKRPGPENSSGGSQLNLN) folds into the DAD domain. The tract at residues 1053 to 1074 (TGLRKRPGPENSSGGSQLNLNK) is disordered. Polar residues predominate over residues 1062-1074 (ENSSGGSQLNLNK).

It belongs to the formin homology family. Diaphanous subfamily. In terms of assembly, interacts (via GBD/FH3 domain) with activated Rho-GTPases.

Formins play an important role in the nucleation of actin and the formation of linear actin filaments. The polypeptide is Formin-G (forG) (Dictyostelium discoideum (Social amoeba)).